Reading from the N-terminus, the 695-residue chain is Spermidine/spermine N(1)-acetyltransferase-like protein 1 (695 aa).

Polar residues-rich tracts occupy residues 1 to 39 (MNQS…QGSA), 52 to 68 (PSMS…NLPD), and 78 to 98 (DTWQ…SQLV). Disordered regions lie at residues 1–274 (MNQS…MNQM), 290–332 (DMKQ…PGMW), 344–375 (ASIS…NQSG), and 387–493 (RQSG…GLSQ). Residues 105–122 (SQPDPSQPGPSQSGPSQS) show a composition bias toward low complexity. Polar residues-rich tracts occupy residues 123-179 (RMRQ…TGLS), 197-208 (GVQQPGISQQVP), 231-266 (PDTS…QPSP), 294-310 (PSMS…NLPD), 355-375 (APSQ…NQSG), 389-422 (SGGS…TGLS), and 459-471 (PGTS…QTGM). One can recognise an N-acetyltransferase domain in the interval 529 to 695 (FQIRHAEAGD…EELLDMAWEE (167 aa)). 552–553 (CE) lines the substrate pocket. Acetyl-CoA contacts are provided by residues 618 to 620 (FYV) and 626 to 631 (GLGIGA). Substrate is bound by residues 650 to 652 (HFL) and glutamate 676.

This sequence belongs to the acetyltransferase family.

The sequence is that of Spermidine/spermine N(1)-acetyltransferase-like protein 1 (SATL1) from Homo sapiens (Human).